The following is a 294-amino-acid chain: Acetaldehyde dehydrogenase (294 aa).

11–14 (SGNI) serves as a coordination point for NAD(+). The Acyl-thioester intermediate role is filled by C126. NAD(+)-binding positions include 157 to 165 (SAGPGTRAN) and N269.

This sequence belongs to the acetaldehyde dehydrogenase family.

It carries out the reaction acetaldehyde + NAD(+) + CoA = acetyl-CoA + NADH + H(+). In Geobacillus stearothermophilus (Bacillus stearothermophilus), this protein is Acetaldehyde dehydrogenase (pheF).